The sequence spans 314 residues: Annexin-like protein RJ4 (314 aa).

Annexin repeat units lie at residues 10-81, 82-153, 165-236, and 240-311; these read FCAK…RWTL, DPAD…ALVT, KLAN…TAIR, and DPKK…TLLG. Ca(2+)-binding residues include glycine 25, glycine 27, and glutamate 67. Ca(2+)-binding residues include isoleucine 253, arginine 255, glycine 257, aspartate 297, and threonine 298.

The protein belongs to the annexin (TC 1.A.31.1) family. Predominantly in developing fruit.

In Fragaria ananassa (Strawberry), this protein is Annexin-like protein RJ4.